The sequence spans 2176 residues: Nipped-B-like protein scc-2 (2176 aa).

Positions 1-25 (MDPNNLQNSLNGTGNPNFQPVQTNA) are enriched in polar residues. 7 disordered regions span residues 1–27 (MDPN…NAGG), 150–170 (PIPQ…QIQS), 464–483 (SEAT…DEEG), 495–514 (MMSV…NQRK), 523–551 (YDSL…DDED), 585–615 (QHFF…IESR), and 669–708 (DSLD…EMDE). A compositionally biased stretch (low complexity) spans 464–473 (SEATQSSSVT). 2 stretches are compositionally biased toward basic and acidic residues: residues 597 to 615 (EDRI…IESR) and 685 to 695 (SGGDHHHKGDE). Residues 696–708 (NSDESDEEEEMDE) are compositionally biased toward acidic residues. HEAT repeat units follow at residues 1280–1312 (DTYL…IIEA), 1320–1351 (EDVQ…FVLY), 1353–1388 (EEYV…ICEK), 1393–1426 (EMIP…LWFQ), 1692–1723 (EKVF…FCAQ), 1803–1834 (QKYW…TLNQ), and 1840–1871 (GASI…IDSK). Residues 2149–2176 (ITAANDDYDEEEDGGEDSRGPIMEQMEH) form a disordered region. Over residues 2154–2163 (DDYDEEEDGG) the composition is skewed to acidic residues.

Belongs to the SCC2/Nipped-B family. May heterodimerize with mau-2/SCC4 to form the cohesin loading complex.

The protein resides in the nucleus. The protein localises to the chromosome. Plays an important role in the loading of the cohesin complex on to meiotic chromosomes. Forms a heterodimeric complex (also known as cohesin loading complex) with mau-2/SCC4 which mediates the loading of the cohesin complex onto chromatin. Plays an essential role in cell division during embryonic development. Promotes normal chromosome organization during meiosis. Required for the assembly of the synaptonemal complex between homologous chromosomes to promote sister chromatid cohesion during meiosis. Required for chromosome segregation during mitosis and meiosis. Plays a role in DNA double-strand break (DSB) repair during meiotic recombination and promotes the assembly of the 9-1-1 cell-cycle checkpoint response complex which is required for inducing apoptosis in response to DNA damage, at DNA damage sites. This is Nipped-B-like protein scc-2 from Caenorhabditis elegans.